The sequence spans 139 residues: D-ribose pyranase (139 aa).

His-20 functions as the Proton donor in the catalytic mechanism. Substrate is bound by residues Asp-28, His-106, and 128-130 (YAN).

Belongs to the RbsD / FucU family. RbsD subfamily. In terms of assembly, homodecamer.

The protein resides in the cytoplasm. The catalysed reaction is beta-D-ribopyranose = beta-D-ribofuranose. It functions in the pathway carbohydrate metabolism; D-ribose degradation; D-ribose 5-phosphate from beta-D-ribopyranose: step 1/2. Its function is as follows. Catalyzes the interconversion of beta-pyran and beta-furan forms of D-ribose. In Aliivibrio salmonicida (strain LFI1238) (Vibrio salmonicida (strain LFI1238)), this protein is D-ribose pyranase.